Reading from the N-terminus, the 417-residue chain is NADH-quinone oxidoreductase subunit D (417 aa).

This sequence belongs to the complex I 49 kDa subunit family. NDH-1 is composed of 14 different subunits. Subunits NuoB, C, D, E, F, and G constitute the peripheral sector of the complex.

Its subcellular location is the cell inner membrane. It carries out the reaction a quinone + NADH + 5 H(+)(in) = a quinol + NAD(+) + 4 H(+)(out). Its function is as follows. NDH-1 shuttles electrons from NADH, via FMN and iron-sulfur (Fe-S) centers, to quinones in the respiratory chain. The immediate electron acceptor for the enzyme in this species is believed to be ubiquinone. Couples the redox reaction to proton translocation (for every two electrons transferred, four hydrogen ions are translocated across the cytoplasmic membrane), and thus conserves the redox energy in a proton gradient. This is NADH-quinone oxidoreductase subunit D from Verminephrobacter eiseniae (strain EF01-2).